Consider the following 341-residue polypeptide: Thymidine kinase (341 aa).

Residue 19–26 (GAYGIGKT) participates in ATP binding. Catalysis depends on glutamate 48, which acts as the Proton acceptor. Substrate contacts are provided by tyrosine 66 and glutamine 90. Arginine 183 provides a ligand contact to ATP. Arginine 189 contacts substrate.

This sequence belongs to the herpesviridae thymidine kinase family. Homodimer.

It catalyses the reaction thymidine + ATP = dTMP + ADP + H(+). Its function is as follows. Catalyzes the transfer of the gamma-phospho group of ATP to thymidine to generate dTMP in the salvage pathway of pyrimidine synthesis. The dTMP serves as a substrate for DNA polymerase during viral DNA replication. Allows the virus to be reactivated and to grow in non-proliferative cells lacking a high concentration of phosphorylated nucleic acid precursors. The sequence is that of Thymidine kinase from Varicella-zoster virus (strain Dumas) (HHV-3).